The chain runs to 546 residues: Chaperonin GroEL (546 aa).

ATP is bound by residues 30 to 33 (TLGP), Lys-51, 87 to 91 (DGTTT), Gly-415, 479 to 481 (NAA), and Asp-495. A disordered region spans residues 527–546 (DESAAPAMPGGMGGMGDMGM). Over residues 536–546 (GGMGGMGDMGM) the composition is skewed to gly residues.

This sequence belongs to the chaperonin (HSP60) family. In terms of assembly, forms a cylinder of 14 subunits composed of two heptameric rings stacked back-to-back. Interacts with the co-chaperonin GroES.

Its subcellular location is the cytoplasm. The catalysed reaction is ATP + H2O + a folded polypeptide = ADP + phosphate + an unfolded polypeptide.. Functionally, together with its co-chaperonin GroES, plays an essential role in assisting protein folding. The GroEL-GroES system forms a nano-cage that allows encapsulation of the non-native substrate proteins and provides a physical environment optimized to promote and accelerate protein folding. This is Chaperonin GroEL from Acidovorax ebreus (strain TPSY) (Diaphorobacter sp. (strain TPSY)).